We begin with the raw amino-acid sequence, 123 residues long: Protein crumbs homolog 3 (123 aa).

The signal sequence occupies residues 1-26 (MASPGLGLLLALGLPLLPARWGRAWG). The Extracellular portion of the chain corresponds to 27–59 (QTLDPHVNENGTITPSAPGSGSNGALSQEAITA). Asn-36 carries N-linked (GlcNAc...) asparagine glycosylation. A helical transmembrane segment spans residues 60 to 80 (IIVVFSLLAAVLLAVGLVLLL). Residues 81-120 (RKLREKRQTQGTYRPSSEEQFNHAAEARAPQDSKETVRGC) lie on the Cytoplasmic side of the membrane. Positions 87–123 (RQTQGTYRPSSEEQFNHAAEARAPQDSKETVRGCLPI) are disordered. A compositionally biased stretch (basic and acidic residues) spans 96–117 (SSEEQFNHAAEARAPQDSKETV). A PDZ-binding motif is present at residues 119-123 (GCLPI).

Component of a complex composed of CRB3, PALS1 and PATJ. Interacts (via C-terminus) with PALS1 (via PDZ domain). Interacts with PARD6A. Interacts (via intracellular domain) with EPB41L5. Interacts with WDR83.

It localises to the apical cell membrane. The protein resides in the cell junction. It is found in the tight junction. Functionally, involved in the establishment of cell polarity in mammalian epithelial cells. Regulates the morphogenesis of tight junctions. Involved in promoting phosphorylation and cytoplasmic retention of transcriptional coactivators YAP1 and WWTR1/TAZ which leads to suppression of TGFB1-dependent transcription of target genes such as CCN2/CTGF, SERPINE1/PAI1, SNAI1/SNAIL1 and SMAD7. This chain is Protein crumbs homolog 3, found in Canis lupus familiaris (Dog).